The following is a 129-amino-acid chain: Serum amyloid A-4 protein (129 aa).

A signal peptide spans 1–18; the sequence is MKLLIGILFCTLIMGVTG. Positions 107–121 are enriched in basic and acidic residues; sequence AEEWGRSGQDPDHFR. The disordered stretch occupies residues 107 to 129; it reads AEEWGRSGQDPDHFRPAGLPKKY.

This sequence belongs to the SAA family. In terms of assembly, apolipoprotein of the HDL complex.

It is found in the secreted. Its function is as follows. Major acute phase reactant. This Bos taurus (Bovine) protein is Serum amyloid A-4 protein.